Here is a 593-residue protein sequence, read N- to C-terminus: Glyoxylate carboligase (593 aa).

This sequence belongs to the TPP enzyme family. In terms of assembly, homotetramer. The cofactor is Mg(2+). Thiamine diphosphate is required as a cofactor.

The catalysed reaction is 2 glyoxylate + H(+) = 2-hydroxy-3-oxopropanoate + CO2. Its pathway is organic acid metabolism; glycolate degradation; 3-phospho-D-glycerate from glycolate: step 2/4. Its function is as follows. Catalyzes the condensation of two molecules of glyoxylate to give 2-hydroxy-3-oxopropanoate (also termed tartronate semialdehyde). In Escherichia coli O157:H7, this protein is Glyoxylate carboligase (gcl).